A 579-amino-acid polypeptide reads, in one-letter code: Putative fatty-acid--CoA ligase fadD21 (579 aa).

Belongs to the ATP-dependent AMP-binding enzyme family.

In Mycobacterium leprae (strain TN), this protein is Putative fatty-acid--CoA ligase fadD21 (fadD21).